A 61-amino-acid chain; its full sequence is Cytotoxin 1 (61 aa).

Disulfide bonds link cysteine 3–cysteine 22, cysteine 15–cysteine 39, cysteine 43–cysteine 54, and cysteine 55–cysteine 60.

It belongs to the three-finger toxin family. Short-chain subfamily. Type IB cytotoxin sub-subfamily. Expressed by the venom gland.

It localises to the secreted. Functionally, this protein lyses red blood cells and has cardiotoxic and hypotensive activities. In Hemachatus haemachatus (Rinkhals), this protein is Cytotoxin 1.